Reading from the N-terminus, the 385-residue chain is MRNPDIGIDDLTALFIADTPLIDVRAPVEFTQGSLPGAVNLPILNDEERALVGTTYKQQGSEAAIKLGYEMVSGSVKQNRLQQWLDFIHQHPRAILYCFRGGKRSQITQQWLRDTGIDSPLITGGYKRARQFLISTIDRFSEHRKLLVITGPTGSGKTRLIHDISNSHPVLDIEALARHRGSAFGGMSVPQPSQIDFENHLAVNLLKLEQNNLSEPVIVEDESRHTGKVYLPDSFFHHLRNSEIIWVDEPLATRVDNIFEDYILTTPIGQAQRIRQAIPPLASTVETREILRQQARQLFDKYAGALQAISKKLGGDRFQEVSEDLENARSDFENKNEIQSNKIWIEKLVRYYYDPLYLGSLQRRRVNPCFKGSGQAVMDYLQARK.

The region spanning 15–138 (FIADTPLIDV…ARQFLISTID (124 aa)) is the Rhodanese domain. Cysteine 98 functions as the S-selanylcysteine intermediate in the catalytic mechanism.

Belongs to the SelU family. In terms of assembly, monomer.

It carries out the reaction 5-methylaminomethyl-2-thiouridine(34) in tRNA + selenophosphate + (2E)-geranyl diphosphate + H2O + H(+) = 5-methylaminomethyl-2-selenouridine(34) in tRNA + (2E)-thiogeraniol + phosphate + diphosphate. The enzyme catalyses 5-methylaminomethyl-2-thiouridine(34) in tRNA + (2E)-geranyl diphosphate = 5-methylaminomethyl-S-(2E)-geranyl-thiouridine(34) in tRNA + diphosphate. It catalyses the reaction 5-methylaminomethyl-S-(2E)-geranyl-thiouridine(34) in tRNA + selenophosphate + H(+) = 5-methylaminomethyl-2-(Se-phospho)selenouridine(34) in tRNA + (2E)-thiogeraniol. The catalysed reaction is 5-methylaminomethyl-2-(Se-phospho)selenouridine(34) in tRNA + H2O = 5-methylaminomethyl-2-selenouridine(34) in tRNA + phosphate. Involved in the post-transcriptional modification of the uridine at the wobble position (U34) of tRNA(Lys), tRNA(Glu) and tRNA(Gln). Catalyzes the conversion of 2-thiouridine (S2U-RNA) to 2-selenouridine (Se2U-RNA). Acts in a two-step process involving geranylation of 2-thiouridine (S2U) to S-geranyl-2-thiouridine (geS2U) and subsequent selenation of the latter derivative to 2-selenouridine (Se2U) in the tRNA chain. This Nitrosomonas europaea (strain ATCC 19718 / CIP 103999 / KCTC 2705 / NBRC 14298) protein is tRNA 2-selenouridine synthase.